Here is an 89-residue protein sequence, read N- to C-terminus: Small ribosomal subunit protein uS15 (89 aa).

This sequence belongs to the universal ribosomal protein uS15 family. In terms of assembly, part of the 30S ribosomal subunit. Forms a bridge to the 50S subunit in the 70S ribosome, contacting the 23S rRNA.

In terms of biological role, one of the primary rRNA binding proteins, it binds directly to 16S rRNA where it helps nucleate assembly of the platform of the 30S subunit by binding and bridging several RNA helices of the 16S rRNA. Forms an intersubunit bridge (bridge B4) with the 23S rRNA of the 50S subunit in the ribosome. The polypeptide is Small ribosomal subunit protein uS15 (Proteus mirabilis (strain HI4320)).